Consider the following 775-residue polypeptide: Homeobox protein SIX4 (775 aa).

Positions 1–10 (MSSSSPTGQI) are enriched in polar residues. 2 disordered regions span residues 1–76 (MSSS…AGAA) and 263–313 (WFKN…DGVT). Position 2 is an N-acetylserine (Ser-2). The segment covering 54–63 (EPGDAAAASR) has biased composition (low complexity). A DNA-binding region (homeobox) is located at residues 216 to 275 (GEETVYCFKEKSRNALKELYKQNRYPSPAEKRHLAKITGLSLTQVSNWFKNRRQRDRNPS). 2 stretches are compositionally biased toward basic and acidic residues: residues 271–283 (DRNP…KSES) and 292–301 (ESSKGHEDLS). The transactivation domain stretch occupies residues 582 to 775 (AQVNASLSSE…VQLDEDMQDL (194 aa)). The residue at position 634 (Ser-634) is a Phosphoserine.

This sequence belongs to the SIX/Sine oculis homeobox family. Interacts with EYA3; acts cooperatively with EYA3 to transactivate target genes through interaction and nuclear translocation of EYA3 protein. Mainly expressed in the skeletal muscle (isoform 1 and isoform 2 but not isoform 3), and weakly in the heart. Also found in the retina and the distal tube of kidney. Expressed in skeletal muscle, nasal epithelium, cochlea, parathyroid and salivary gland. Expressed in muscle satellite cells of normal and regenerating muscles.

Its subcellular location is the nucleus. The protein resides in the cytoplasm. Transcriptional regulator which can act as both a transcriptional repressor and activator by binding a DNA sequence on these target genes and is involved in processes like cell differentiation, cell migration and cell survival. Transactivates gene expression by binding a 5'-[CAT]A[CT][CT][CTG]GA[GAT]-3' motif present in the Trex site and from a 5'-TCA[AG][AG]TTNC-3' motif present in the MEF3 site of the muscle-specific genes enhancer. Acts cooperatively with EYA proteins to transactivate their target genes through interaction and nuclear translocation of EYA protein. Acts synergistically with SIX1 to regulate target genes involved in formation of various organs, including muscle, kidney, gonad, ganglia, olfactory epithelium and cranial skeleton. Plays a role in several important steps of muscle development. Controls the genesis of hypaxial myogenic progenitors in the dermomyotome by transactivating PAX3 and the delamination and migration of the hypaxial precursors from the ventral lip to the limb buds through the transactivation of PAX3, MET and LBX1. Controls myoblast determination by transactivating MYF5, MYOD1 and MYF6. Controls somitic differentiation in myocyte through MYOG transactivation. Plays a role in synaptogenesis and sarcomere organization by participating in myofiber specialization during embryogenesis by activating fast muscle program in the primary myotome resulting in an up-regulation of fast muscle genes, including ATP2A1, MYL1 and TNNT3. Simultaneously, is also able to activate inhibitors of slow muscle genes, such as SOX6, HRASLS, and HDAC4, thereby restricting the activation of the slow muscle genes. During muscle regeneration, negatively regulates differentiation of muscle satellite cells through down-regulation of MYOG expression. During kidney development regulates the early stages of metanephros development and ureteric bud formation through regulation of GDNF, SALL1, PAX8 and PAX2 expression. Plays a role in gonad development by regulating both testis determination and size determination. In gonadal sex determination, transactivates ZFPM2 by binding a MEF3 consensus sequence, resulting in SRY up-regulation. In gonadal size determination, transactivates NR5A1 by binding a MEF3 consensus sequence resulting in gonadal precursor cell formation regulation. During olfactory development mediates the specification and patterning of olfactory placode through fibroblast growth factor and BMP4 signaling pathways and also regulates epithelial cell proliferation during placode formation. Promotes survival of sensory neurons during early trigeminal gangliogenesis. In the developing dorsal root ganglia, up-regulates SLC12A2 transcription. Regulates early thymus/parathyroid organogenesis through regulation of GCM2 and FOXN1 expression. Forms gustatory papillae during development of the tongue. Also plays a role during embryonic cranial skeleton morphogenesis. The sequence is that of Homeobox protein SIX4 (Six4) from Mus musculus (Mouse).